The primary structure comprises 313 residues: Solute carrier family 25 member 36 (313 aa).

Solcar repeat units lie at residues 4 to 110 (RDTL…CKEK), 118 to 205 (DSTQ…IKRK), and 226 to 310 (SDFV…VVYL). The next 6 helical transmembrane spans lie at 7-27 (LVHL…TCPL), 41-57 (LYIS…ASVN), 113-133 (NIFN…AGFT), 182-202 (MSAS…YESI), 228-248 (FVGM…IAYP), and 293-313 (QIPN…LLDG).

It belongs to the mitochondrial carrier (TC 2.A.29) family.

It localises to the mitochondrion inner membrane. Its function is as follows. Mitochondrial transporter that imports/exports pyrimidine nucleotides into and from mitochondria. Transports preferentially cytosine and uracil (deoxy)nucleoside mono-, di-, and triphosphates by uniport and antiport mechanism. This is Solute carrier family 25 member 36 (SLC25A36) from Gallus gallus (Chicken).